The following is a 444-amino-acid chain: Homogentisate 1,2-dioxygenase (444 aa).

Residue His-298 is the Proton acceptor of the active site. Residues His-341 and Glu-347 each contribute to the Fe cation site. 2 residues coordinate homogentisate: Tyr-356 and His-377. His-377 serves as a coordination point for Fe cation.

This sequence belongs to the homogentisate dioxygenase family. Hexamer; dimer of trimers. Fe cation serves as cofactor.

It carries out the reaction homogentisate + O2 = 4-maleylacetoacetate + H(+). It functions in the pathway amino-acid degradation; L-phenylalanine degradation; acetoacetate and fumarate from L-phenylalanine: step 4/6. Its function is as follows. Involved in the catabolism of homogentisate (2,5-dihydroxyphenylacetate or 2,5-OH-PhAc), a central intermediate in the degradation of phenylalanine and tyrosine. Catalyzes the oxidative ring cleavage of the aromatic ring of homogentisate to yield maleylacetoacetate. The protein is Homogentisate 1,2-dioxygenase of Burkholderia orbicola (strain AU 1054).